Consider the following 211-residue polypeptide: FMN-dependent NADH:quinone oxidoreductase (211 aa).

Residues serine 10 and 16–18 each bind FMN; that span reads SVS.

Belongs to the azoreductase type 1 family. As to quaternary structure, homodimer. Requires FMN as cofactor.

The enzyme catalyses 2 a quinone + NADH + H(+) = 2 a 1,4-benzosemiquinone + NAD(+). It carries out the reaction N,N-dimethyl-1,4-phenylenediamine + anthranilate + 2 NAD(+) = 2-(4-dimethylaminophenyl)diazenylbenzoate + 2 NADH + 2 H(+). Functionally, quinone reductase that provides resistance to thiol-specific stress caused by electrophilic quinones. Also exhibits azoreductase activity. Catalyzes the reductive cleavage of the azo bond in aromatic azo compounds to the corresponding amines. The polypeptide is FMN-dependent NADH:quinone oxidoreductase (Parafrankia sp. (strain EAN1pec)).